The chain runs to 347 residues: Cannabinoid receptor 2 (347 aa).

Residues 1–33 (MEGCRETEVTNGSNGGLEFNPMKEYMILSSGQQ) lie on the Extracellular side of the membrane. An N-linked (GlcNAc...) asparagine glycan is attached at Asn-11. Residues 34 to 59 (IAVAVLCTLMGLLSALENMAVLYIIL) traverse the membrane as a helical segment. Over 60 to 71 (SSRRLRRKPSYL) the chain is Cytoplasmic. A helical transmembrane segment spans residues 72 to 92 (FISSLAGADFLASVIFACNFV). Residues 93–104 (IFHVFHGVDSNA) lie on the Extracellular side of the membrane. Residues 105 to 129 (IFLLKIGSVTMTFTASVGSLLLTAV) form a helical membrane-spanning segment. Topologically, residues 130–149 (DRYLCLCYPPTYKALVTRGR) are cytoplasmic. Residues 150 to 172 (ALVALCVMWVLSALISYLPLMGW) form a helical membrane-spanning segment. Over 173-188 (TCCPSPCSELFPLIPN) the chain is Extracellular. A helical membrane pass occupies residues 189-214 (DYLLGWLLFIAILFSGIIYTYGYVLW). The Cytoplasmic segment spans residues 215–246 (KAHRHVATLAEHQDRQVPGIARMRLDVRLAKT). Residues 247–267 (LGLVLAVLLICWFPALALMGH) form a helical membrane-spanning segment. Topologically, residues 268 to 279 (SLVTTLSDQVKE) are extracellular. The helical transmembrane segment at 280 to 301 (AFAFCSMLCLVNSMVNPIIYAL) threads the bilayer. The Cytoplasmic segment spans residues 302–347 (RSGEIRSAAQHCLIGWKKYLQGLGPEGKEEGPRSSVTETEADVKTT). The disordered stretch occupies residues 326–347 (PEGKEEGPRSSVTETEADVKTT). Residues Ser-335 and Ser-336 each carry the phosphoserine modification. Thr-338 carries the phosphothreonine modification.

The protein belongs to the G-protein coupled receptor 1 family. Expressed by cells of hematopoietic origin. Expressed in skin in suprabasal layers and hair follicles, in brain by neurons and glial cells and by osteoblasts, osteocytes, osteoclasts (at protein level).

It is found in the cell membrane. The protein localises to the cell projection. Its subcellular location is the dendrite. The protein resides in the perikaryon. In terms of biological role, heterotrimeric G protein-coupled receptor for endocannabinoid 2-arachidonoylglycerol mediating inhibition of adenylate cyclase. May function in inflammatory response, nociceptive transmission and bone homeostasis. The protein is Cannabinoid receptor 2 (Cnr2) of Mus musculus (Mouse).